We begin with the raw amino-acid sequence, 422 residues long: Mannosylglycerate synthase (422 aa).

GDP-alpha-D-mannose contacts are provided by residues 7-11, glutamine 66, lysine 77, aspartate 101, and 101-102; these read PFKEE and DS. (R)-glycerate contacts are provided by residues arginine 132 and 137 to 140; that span reads AMIT. 3 residues coordinate GDP-alpha-D-mannose: leucine 164, aspartate 193, and tyrosine 221.

The protein belongs to the glycosyltransferase 78 family.

The enzyme catalyses (R)-glycerate + GDP-alpha-D-mannose = (2R)-2-O-(alpha-D-mannosyl)-glycerate + GDP + H(+). It catalyses the reaction GDP-alpha-D-glucose + (R)-glycerate = (2R)-2-O-(alpha-D-glucopyranosyl)-glycerate + GDP + H(+). Its activity is regulated as follows. Activity is not dependent on divalent cations, but it is enhanced by Mg(2+). In terms of biological role, involved in the biosynthesis of the compatible solute alpha-D-mannosyl-glycerate (MG). Catalyzes the condensation of GDP-alpha-D-mannose (GDP-Man) with D-glycerate to produce alpha-D-mannosyl-glycerate. Can also use GDP-alpha-D-glucose (GDP-Glc) as sugar donor to produce alpha-D-glucopyranosyl-glycerate (GG). This chain is Mannosylglycerate synthase, found in Selaginella moellendorffii (Spikemoss).